A 329-amino-acid polypeptide reads, in one-letter code: Ketol-acid reductoisomerase (NADP(+)) (329 aa).

The 181-residue stretch at 1-181 (MKVYYEQDAN…GGTRSGVIET (181 aa)) folds into the KARI N-terminal Rossmann domain. NADP(+) contacts are provided by residues 24–27 (YGSQ), arginine 47, and 82–85 (DQYQ). Histidine 107 is an active-site residue. Glycine 133 contributes to the NADP(+) binding site. Positions 182 to 327 (TFREETETDL…ARLRSMMPWL (146 aa)) constitute a KARI C-terminal knotted domain. 4 residues coordinate Mg(2+): aspartate 190, glutamate 194, glutamate 226, and glutamate 230. Serine 251 is a binding site for substrate.

Belongs to the ketol-acid reductoisomerase family. Requires Mg(2+) as cofactor.

It carries out the reaction (2R)-2,3-dihydroxy-3-methylbutanoate + NADP(+) = (2S)-2-acetolactate + NADPH + H(+). It catalyses the reaction (2R,3R)-2,3-dihydroxy-3-methylpentanoate + NADP(+) = (S)-2-ethyl-2-hydroxy-3-oxobutanoate + NADPH + H(+). Its pathway is amino-acid biosynthesis; L-isoleucine biosynthesis; L-isoleucine from 2-oxobutanoate: step 2/4. It functions in the pathway amino-acid biosynthesis; L-valine biosynthesis; L-valine from pyruvate: step 2/4. Involved in the biosynthesis of branched-chain amino acids (BCAA). Catalyzes an alkyl-migration followed by a ketol-acid reduction of (S)-2-acetolactate (S2AL) to yield (R)-2,3-dihydroxy-isovalerate. In the isomerase reaction, S2AL is rearranged via a Mg-dependent methyl migration to produce 3-hydroxy-3-methyl-2-ketobutyrate (HMKB). In the reductase reaction, this 2-ketoacid undergoes a metal-dependent reduction by NADPH to yield (R)-2,3-dihydroxy-isovalerate. The chain is Ketol-acid reductoisomerase (NADP(+)) from Oleidesulfovibrio alaskensis (strain ATCC BAA-1058 / DSM 17464 / G20) (Desulfovibrio alaskensis).